A 22-amino-acid chain; its full sequence is Chitin-binding protein 3 (22 aa).

Glycosylated; contains 2.5% carbohydrates.

In terms of biological role, chitin-binding protein. Has antifungal activity against F.solani, F.oxysporum, C.musae and C.gloesporoides but not against P.oligandrum. Depending on concentration the antifungal activity can be fungistatic or fungicidal. Inhibits both spore germination and mycelial growth in F.solani at a concentration of 0.1 mg/ml. Has antifungal activity against C.krusei, C.albicans, C.tropicalis and C.parapsilosis. Has no chitinase, beta-glucanase or hemagglutinating activity. Acts as a flocculent. This is Chitin-binding protein 3 from Moringa oleifera (Horseradish tree).